A 380-amino-acid chain; its full sequence is Zinc finger protein neuro-d4 (380 aa).

The disordered stretch occupies residues alanine 132–alanine 164. The segment at tyrosine 190 to histidine 213 adopts a C2H2-type zinc-finger fold. 2 PHD-type zinc fingers span residues glutamate 262–cysteine 321 and cysteine 318–glutamine 368. Residues cysteine 265, cysteine 268, cysteine 286, cysteine 289, histidine 294, cysteine 297, cysteine 315, cysteine 318, cysteine 321, cysteine 324, cysteine 336, cysteine 339, histidine 344, cysteine 347, cysteine 362, and cysteine 365 each contribute to the Zn(2+) site.

The protein belongs to the requiem/DPF family. In terms of assembly, component of neuron-specific chromatin remodeling complex (nBAF complex), a subfamily of ATP-dependent SWI/SNF chromatin remodeling complexes.

The protein resides in the cytoplasm. It is found in the nucleus. In terms of biological role, may have an important role in developing neurons by participating in regulation of cell survival, possibly as a neurospecific transcription factor. Belongs to the neuron-specific chromatin remodeling complex (nBAF complex) and plays a role in neural development. This is Zinc finger protein neuro-d4 from Gallus gallus (Chicken).